A 175-amino-acid chain; its full sequence is Ribosome maturation factor RimM (175 aa).

The PRC barrel domain maps to 97–169; the sequence is EDKFYFHEII…TVRVITPEGL (73 aa).

The protein belongs to the RimM family. As to quaternary structure, binds ribosomal protein uS19.

It is found in the cytoplasm. Functionally, an accessory protein needed during the final step in the assembly of 30S ribosomal subunit, possibly for assembly of the head region. Essential for efficient processing of 16S rRNA. May be needed both before and after RbfA during the maturation of 16S rRNA. It has affinity for free ribosomal 30S subunits but not for 70S ribosomes. The protein is Ribosome maturation factor RimM of Christiangramia forsetii (strain DSM 17595 / CGMCC 1.15422 / KT0803) (Gramella forsetii).